Reading from the N-terminus, the 398-residue chain is Cytochrome b (398 aa).

The chain crosses the membrane as a helical span at residues 45 to 65 (LGSIAGIALVIQIITGVILAM). Histidine 95 and histidine 109 together coordinate heme b. 9 consecutive transmembrane segments (helical) span residues 96–116 (AVGASMFFAAIYLHIARGLYY), 129–149 (IGIIIFLIMMATAFMGYVLPW), 164–184 (FSAIPLVGEPIVIWLWGGFSV), 192–212 (FFALHYLFPFIIVVLVILHLV), 245–265 (FVGFGVYFIIFAYFIFYAPNY), 277–297 (PLVTPAHIVPEWYFLPFYAIL), 304–324 (LGGVFLMFGSIVVLFLLPWLD), 339–359 (IAFWIFMADCLFLGYLGSKPV), and 366–386 (ISRFAVCYYFCHFLLVLPLIG). Heme b-binding residues include histidine 196 and histidine 210.

Belongs to the cytochrome b family. As to quaternary structure, the main subunits of complex b-c1 are: cytochrome b, cytochrome c1 and the Rieske protein. The cofactor is heme b.

The protein localises to the cell membrane. Its function is as follows. Component of the ubiquinol-cytochrome c reductase complex (complex III or cytochrome b-c1 complex), which is a respiratory chain that generates an electrochemical potential coupled to ATP synthesis. This chain is Cytochrome b (petB), found in Rickettsia prowazekii (strain Madrid E).